Reading from the N-terminus, the 49-residue chain is Large ribosomal subunit protein bL33B (49 aa).

Belongs to the bacterial ribosomal protein bL33 family.

The polypeptide is Large ribosomal subunit protein bL33B (Lacticaseibacillus paracasei (strain ATCC 334 / BCRC 17002 / CCUG 31169 / CIP 107868 / KCTC 3260 / NRRL B-441) (Lactobacillus paracasei)).